The chain runs to 150 residues: Cytochrome c oxidase subunit 5A, mitochondrial (150 aa).

The N-terminal 41 residues, 1 to 41 (MLGTALRRCAVAAASRAGSRGLLHPTPVPGPTAAIQSIRCY), are a transit peptide targeting the mitochondrion. The SIFI-degron signature appears at 2-17 (LGTALRRCAVAAASRA). An N6-acetyllysine mark is found at lysine 87 and lysine 113. Threonine 141 is modified (phosphothreonine).

The protein belongs to the cytochrome c oxidase subunit 5A family. Component of the cytochrome c oxidase (complex IV, CIV), a multisubunit enzyme composed of 14 subunits. The complex is composed of a catalytic core of 3 subunits MT-CO1, MT-CO2 and MT-CO3, encoded in the mitochondrial DNA, and 11 supernumerary subunits COX4I, COX5A, COX5B, COX6A, COX6B, COX6C, COX7A, COX7B, COX7C, COX8 and NDUFA4, which are encoded in the nuclear genome. The complex exists as a monomer or a dimer and forms supercomplexes (SCs) in the inner mitochondrial membrane with NADH-ubiquinone oxidoreductase (complex I, CI) and ubiquinol-cytochrome c oxidoreductase (cytochrome b-c1 complex, complex III, CIII), resulting in different assemblies (supercomplex SCI(1)III(2)IV(1) and megacomplex MCI(2)III(2)IV(2)). Interacts with AFG1L. Interacts with RAB5IF. Post-translationally, in response to mitochondrial stress, the precursor protein is ubiquitinated by the SIFI complex in the cytoplasm before mitochondrial import, leading to its degradation. Within the SIFI complex, UBR4 initiates ubiquitin chain that are further elongated or branched by KCMF1.

Its subcellular location is the mitochondrion inner membrane. Its pathway is energy metabolism; oxidative phosphorylation. Component of the cytochrome c oxidase, the last enzyme in the mitochondrial electron transport chain which drives oxidative phosphorylation. The respiratory chain contains 3 multisubunit complexes succinate dehydrogenase (complex II, CII), ubiquinol-cytochrome c oxidoreductase (cytochrome b-c1 complex, complex III, CIII) and cytochrome c oxidase (complex IV, CIV), that cooperate to transfer electrons derived from NADH and succinate to molecular oxygen, creating an electrochemical gradient over the inner membrane that drives transmembrane transport and the ATP synthase. Cytochrome c oxidase is the component of the respiratory chain that catalyzes the reduction of oxygen to water. Electrons originating from reduced cytochrome c in the intermembrane space (IMS) are transferred via the dinuclear copper A center (CU(A)) of subunit 2 and heme A of subunit 1 to the active site in subunit 1, a binuclear center (BNC) formed by heme A3 and copper B (CU(B)). The BNC reduces molecular oxygen to 2 water molecules using 4 electrons from cytochrome c in the IMS and 4 protons from the mitochondrial matrix. The chain is Cytochrome c oxidase subunit 5A, mitochondrial (COX5A) from Otolemur crassicaudatus (Brown greater galago).